The chain runs to 195 residues: Biogenesis of lysosome-related organelles complex 1 subunit 3 (195 aa).

Residues 1-11 show a composition bias toward basic residues; it reads MESSQGRRRRP. A disordered region spans residues 1–72; it reads MESSQGRRRR…PEPEPTVVPV (72 aa). Residues 25–51 show a composition bias toward low complexity; sequence ELSASSSEEELYLGPSGPTRGRPTGLR. T59 is modified (phosphothreonine). S61 bears the Phosphoserine mark.

It belongs to the BLOC1S3 family. In terms of assembly, octamer composed of one copy each BLOC1S1, BLOC1S2, BLOC1S3, BLOC1S4, BLOC1S5, BLOC1S6, DTNBP1/BLOC1S7 and SNAPIN/BLOC1S8. Interacts directly with BLOC1S2. Component of the biogenesis of lysosome-related organelles complex 1 (BLOC-1) composed of BLOC1S1, BLOC1S2, BLOC1S3, BLOC1S4, BLOC1S5, BLOC1S6, DTNBP1/BLOC1S7 and SNAPIN/BLOC1S8. The BLOC-1 complex associates with the AP-3 protein complex and membrane protein cargos. Interacts with BLOC1S4, BLOC1S5 and BLOC1S6. Post-translationally, phosphorylated. As to expression, ubiquitously expressed.

It localises to the cytoplasm. Component of the BLOC-1 complex, a complex that is required for normal biogenesis of lysosome-related organelles (LRO), such as platelet dense granules and melanosomes. In concert with the AP-3 complex, the BLOC-1 complex is required to target membrane protein cargos into vesicles assembled at cell bodies for delivery into neurites and nerve terminals. The BLOC-1 complex, in association with SNARE proteins, is also proposed to be involved in neurite extension. Plays a role in intracellular vesicle trafficking. The polypeptide is Biogenesis of lysosome-related organelles complex 1 subunit 3 (Bloc1s3) (Mus musculus (Mouse)).